The following is a 663-amino-acid chain: DNA ligase 1 (663 aa).

Residues 30–34 (DAEYD) and 78–79 (SL) each bind NAD(+). Catalysis depends on K105, which acts as the N6-AMP-lysine intermediate. The NAD(+) site is built by R126, E161, and K294. The Zn(2+) site is built by C389, C392, C407, and C412. One can recognise a BRCT domain in the interval 574–663 (AAGAPLAGKT…WAQLIEAKLV (90 aa)).

It belongs to the NAD-dependent DNA ligase family. LigA subfamily. The cofactor is Mg(2+). Requires Mn(2+) as cofactor.

The enzyme catalyses NAD(+) + (deoxyribonucleotide)n-3'-hydroxyl + 5'-phospho-(deoxyribonucleotide)m = (deoxyribonucleotide)n+m + AMP + beta-nicotinamide D-nucleotide.. DNA ligase that catalyzes the formation of phosphodiester linkages between 5'-phosphoryl and 3'-hydroxyl groups in double-stranded DNA using NAD as a coenzyme and as the energy source for the reaction. It is essential for DNA replication and repair of damaged DNA. The polypeptide is DNA ligase 1 (Nocardia farcinica (strain IFM 10152)).